The sequence spans 139 residues: Large ribosomal subunit protein eL34 (139 aa).

Positions 113–139 (VSKPPKIAKAPAAAAAAKPAKTATKSK) are disordered.

This sequence belongs to the eukaryotic ribosomal protein eL34 family.

The sequence is that of Large ribosomal subunit protein eL34 (RpL34) from Ochlerotatus triseriatus (Eastern treehole mosquito).